The following is a 315-amino-acid chain: Ribosomal RNA small subunit methyltransferase H (315 aa).

S-adenosyl-L-methionine is bound by residues 37–39 (GGH), aspartate 57, phenylalanine 83, aspartate 105, and glutamine 112.

The protein belongs to the methyltransferase superfamily. RsmH family.

The protein resides in the cytoplasm. It carries out the reaction cytidine(1402) in 16S rRNA + S-adenosyl-L-methionine = N(4)-methylcytidine(1402) in 16S rRNA + S-adenosyl-L-homocysteine + H(+). Specifically methylates the N4 position of cytidine in position 1402 (C1402) of 16S rRNA. In Pseudomonas entomophila (strain L48), this protein is Ribosomal RNA small subunit methyltransferase H.